Reading from the N-terminus, the 557-residue chain is ETHYLENE INSENSITIVE 3-like 5 protein (557 aa).

Disordered stretches follow at residues 1–23 (MVEV…DLEE) and 61–96 (NLNS…RKKM). Low complexity predominate over residues 64–82 (SVISSPSSSTSASSSSSSS). A coiled-coil region spans residues 270-311 (ERVRRLARQSKCLQDKMMAKETDTWSRVLNQEEARLNRLKIS).

The protein belongs to the EIN3 family.

Its subcellular location is the nucleus. Functionally, putative transcription factor that may be involved in the ethylene response pathway. In Arabidopsis thaliana (Mouse-ear cress), this protein is ETHYLENE INSENSITIVE 3-like 5 protein (EIL5).